We begin with the raw amino-acid sequence, 169 residues long: Ribosome maturation factor RimM (169 aa).

Residues 96 to 166 (EDEFYFADLI…AVVVRPVEVE (71 aa)) form the PRC barrel domain.

Belongs to the RimM family. Binds ribosomal protein uS19.

Its subcellular location is the cytoplasm. Its function is as follows. An accessory protein needed during the final step in the assembly of 30S ribosomal subunit, possibly for assembly of the head region. Essential for efficient processing of 16S rRNA. May be needed both before and after RbfA during the maturation of 16S rRNA. It has affinity for free ribosomal 30S subunits but not for 70S ribosomes. This Acidiphilium cryptum (strain JF-5) protein is Ribosome maturation factor RimM.